A 451-amino-acid chain; its full sequence is Tubulin alpha chain (451 aa).

Position 11 (Gln11) interacts with GTP. An N6-acetyllysine modification is found at Lys40. Positions 71, 144, 145, 179, 206, and 228 each coordinate GTP. Residue Glu71 participates in Mg(2+) binding. Glu254 is a catalytic residue.

This sequence belongs to the tubulin family. Dimer of alpha and beta chains. A typical microtubule is a hollow water-filled tube with an outer diameter of 25 nm and an inner diameter of 15 nM. Alpha-beta heterodimers associate head-to-tail to form protofilaments running lengthwise along the microtubule wall with the beta-tubulin subunit facing the microtubule plus end conferring a structural polarity. Microtubules usually have 13 protofilaments but different protofilament numbers can be found in some organisms and specialized cells. The cofactor is Mg(2+). In terms of processing, undergoes a tyrosination/detyrosination cycle, the cyclic removal and re-addition of a C-terminal tyrosine residue by the enzymes tubulin tyrosine carboxypeptidase (TTCP) and tubulin tyrosine ligase (TTL), respectively. Acetylation of alpha chains at Lys-40 stabilizes microtubules and affects affinity and processivity of microtubule motors. This modification has a role in multiple cellular functions, ranging from cell motility, cell cycle progression or cell differentiation to intracellular trafficking and signaling.

It is found in the cytoplasm. The protein localises to the cytoskeleton. The catalysed reaction is GTP + H2O = GDP + phosphate + H(+). Its function is as follows. Tubulin is the major constituent of microtubules, a cylinder consisting of laterally associated linear protofilaments composed of alpha- and beta-tubulin heterodimers. Microtubules grow by the addition of GTP-tubulin dimers to the microtubule end, where a stabilizing cap forms. Below the cap, tubulin dimers are in GDP-bound state, owing to GTPase activity of alpha-tubulin. This Trypanosoma cruzi protein is Tubulin alpha chain.